We begin with the raw amino-acid sequence, 262 residues long: Phosphatidylserine decarboxylase proenzyme (262 aa).

Catalysis depends on charge relay system; for autoendoproteolytic cleavage activity residues D86, H142, and S226. S226 serves as the catalytic Schiff-base intermediate with substrate; via pyruvic acid; for decarboxylase activity. S226 bears the Pyruvic acid (Ser); by autocatalysis mark.

This sequence belongs to the phosphatidylserine decarboxylase family. PSD-B subfamily. Prokaryotic type I sub-subfamily. As to quaternary structure, heterodimer of a large membrane-associated beta subunit and a small pyruvoyl-containing alpha subunit. It depends on pyruvate as a cofactor. Post-translationally, is synthesized initially as an inactive proenzyme. Formation of the active enzyme involves a self-maturation process in which the active site pyruvoyl group is generated from an internal serine residue via an autocatalytic post-translational modification. Two non-identical subunits are generated from the proenzyme in this reaction, and the pyruvate is formed at the N-terminus of the alpha chain, which is derived from the carboxyl end of the proenzyme. The autoendoproteolytic cleavage occurs by a canonical serine protease mechanism, in which the side chain hydroxyl group of the serine supplies its oxygen atom to form the C-terminus of the beta chain, while the remainder of the serine residue undergoes an oxidative deamination to produce ammonia and the pyruvoyl prosthetic group on the alpha chain. During this reaction, the Ser that is part of the protease active site of the proenzyme becomes the pyruvoyl prosthetic group, which constitutes an essential element of the active site of the mature decarboxylase.

It is found in the cell membrane. It carries out the reaction a 1,2-diacyl-sn-glycero-3-phospho-L-serine + H(+) = a 1,2-diacyl-sn-glycero-3-phosphoethanolamine + CO2. It participates in phospholipid metabolism; phosphatidylethanolamine biosynthesis; phosphatidylethanolamine from CDP-diacylglycerol: step 2/2. Functionally, catalyzes the formation of phosphatidylethanolamine (PtdEtn) from phosphatidylserine (PtdSer). The polypeptide is Phosphatidylserine decarboxylase proenzyme (Bacillus cereus (strain AH820)).